The chain runs to 1997 residues: Protein MOR1 (1997 aa).

HEAT repeat units lie at residues 48-86 and 164-202; these read DARLREFGPLFKKTVADSNAPVQEKALDALLAFQRAADA and VVPPKKILKMLPELFDHPDQNVRASSKGLTLELCRWIGK. The disordered stretch occupies residues 236-264; it reads RKIRSEQEKELEEEVVPEAAGTNNSEEAV. 3 HEAT repeats span residues 321–359, 362–400, and 441–479; these read PGDFHEICRTLKKLITDVNLAVSVEATQAIGNLAKGLRT, SGNSRVLLPVLLEKLKEKKPTMTEALSQTLQAMHKSGCI, and LKLHKEYVPICMECLNDGTPEVRDASFSVLTAIAKMVGM. A disordered region spans residues 501–576; the sequence is IGSASDTTSG…DGGPQSKASA (76 aa). Positions 504-520 are enriched in polar residues; that stretch reads ASDTTSGTVAASNTGVG. Residues 529 to 539 show a composition bias toward low complexity; that stretch reads SSSMRRSAASM. HEAT repeat units follow at residues 848-886, 890-928, 931-969, and 1007-1045; these read EDISAKITPTLLKNLGSPDWKLRLESIDAVSKIVEEAHK, PTGTVELFTALRARLYDSNKNLVMATLSTIGGLASAMGP, EKSSKGILADVLKCLGDNKKHMRECTLTALDLWVAAAQL, and PSEALPLLKPSASSLMDKSSEVRKAAESFMNEILKICGQ. A disordered region spans residues 1087–1115; that stretch reads MSLPSKAGSKNNKHGPNDRGSNVSKAVSQ. HEAT repeat units lie at residues 1233–1259, 1260–1294, 1295–1332, and 1334–1372; these read TTCLLKVLDFLPELFDVLKDQSYMLTE, AEAAIFLPCLMEKSGHNIEKVREKMGELIKQMVNI, YSLPKLLPYILEGLRSKNNRTRIECVDIIGYFMDHHGT, and VSGLLKNLPSVAALTAERDGEIRKAALNTLATAYKNLGD. Over residues 1400-1410 the composition is skewed to basic and acidic residues; it reads MDKRREGRPGD. The segment at 1400–1436 is disordered; the sequence is MDKRREGRPGDARAALRRSVRENGSDIAEQSGEAVSR. One copy of the HEAT 14 repeat lies at 1539–1579; it reads RSCKYVLNTLMQTFQIKRLAHAVKEGTLDNLITELLLWLLD. Positions 1755–1776 are disordered; that stretch reads MGQTHWGDAGSNNPNPSTHSTD. Positions 1764–1776 are enriched in polar residues; it reads GSNNPNPSTHSTD.

The protein belongs to the TOG/XMAP215 family.

The protein localises to the cytoplasm. It is found in the cytoskeleton. Its function is as follows. Microtubule-associated protein that is essential for cortical microtubules organization and function. The chain is Protein MOR1 (MOR1) from Oryza sativa subsp. japonica (Rice).